Here is a 391-residue protein sequence, read N- to C-terminus: 3-ketoacyl-CoA thiolase (391 aa).

The active-site Acyl-thioester intermediate is the cysteine 95. Residues histidine 347 and cysteine 377 each act as proton acceptor in the active site.

The protein belongs to the thiolase-like superfamily. Thiolase family. As to quaternary structure, heterotetramer of two alpha chains (FadB) and two beta chains (FadA).

The protein localises to the cytoplasm. The enzyme catalyses an acyl-CoA + acetyl-CoA = a 3-oxoacyl-CoA + CoA. Its pathway is lipid metabolism; fatty acid beta-oxidation. Catalyzes the final step of fatty acid oxidation in which acetyl-CoA is released and the CoA ester of a fatty acid two carbons shorter is formed. This Hahella chejuensis (strain KCTC 2396) protein is 3-ketoacyl-CoA thiolase.